The chain runs to 451 residues: Cysteine desulfurase (451 aa).

Positions 121, 122, 229, 249, and 251 each coordinate pyridoxal 5'-phosphate. The residue at position 252 (Lys252) is an N6-(pyridoxal phosphate)lysine. Thr289 contributes to the pyridoxal 5'-phosphate binding site. The Cysteine persulfide intermediate role is filled by Cys375. Position 375 (Cys375) interacts with [2Fe-2S] cluster. Cys375 is a binding site for Zn(2+). Position 375 is a cysteine persulfide (Cys375).

It belongs to the class-V pyridoxal-phosphate-dependent aminotransferase family. NifS/IscS subfamily. Homodimer. Component of the mitochondrial core iron-sulfur cluster (ISC) complex composed of NFS1, LYRM4, NDUFAB1, ISCU, FXN, and FDX2; this complex is a heterohexamer containing two copies of each monomer. Component of cyteine desulfurase complex composed of NFS1, LYRM4 and NDUFAB1; this complex contributes to the activation of cysteine desulfurase activity and NFS1 stabilization. Interacts (homodimer form) with ISCU (D-state); each monomer interacts with the C-terminal regions of each NFS1 monomer. Interacts with HSPA9. Interacts (via homodimer form) with FDX2. Interacts (via homodimer form) with FXN. Interacts with LYRM4. Component of a complex composed of FXN, NFS1, LYRM4 and ISCU. In terms of assembly, monomer. Homodimer. Oligomer. Interacts with ISCU. Component of the cysteine desulfurase complex composed of NFS1 and LYRM4; this complex contributes to the activation of cysteine desulfurase activity. Interacts with MOCS3. The cofactor is pyridoxal 5'-phosphate. N-gluconoylated. Post-translationally, cysteine persulfide intermediate is reduced by thiol-containing molecules like glutathione and L-cysteine. Persulfide reduction is a rate-limiting step of cysteine desulfurase catalytic cycle.

It is found in the mitochondrion. The protein localises to the cytoplasm. It localises to the nucleus. Its subcellular location is the cytoskeleton. The protein resides in the microtubule organizing center. It is found in the centrosome. It carries out the reaction (sulfur carrier)-H + L-cysteine = (sulfur carrier)-SH + L-alanine. It catalyses the reaction L-cysteinyl-[cysteine desulfurase] + L-cysteine = S-sulfanyl-L-cysteinyl-[cysteine desulfurase] + L-alanine. Active only in complex with LYRM4. Functionally, cysteine desulfurase, of the core iron-sulfur cluster (ISC) assembly complex, that catalyzes the desulfuration of L-cysteine to L-alanine, as component of the cysteine desulfurase complex leading to the formation of a cysteine persulfide intermediate at the active site cysteine residue and participates in the [2Fe-2S] clusters assembly on the scaffolding protein ISCU. The persulfide is then transferred on the flexible Cys loop from the catalytic site of NFS1 to the surface of NFS1. After the NFS1-linked persulfide sulfur is transferred to one of the conserved Cys residues of the scaffold, a reaction assisted by FXN. The core iron-sulfur cluster (ISC) assembly complex is involved in the de novo synthesis of a [2Fe-2S] cluster, the first step of the mitochondrial iron-sulfur protein biogenesis. This process is initiated by the cysteine desulfurase complex (NFS1:LYRM4:NDUFAB1) that produces persulfide which is delivered on the scaffold protein ISCU in a FXN-dependent manner. Then this complex is stabilized by FDX2 which provides reducing equivalents to accomplish the [2Fe-2S] cluster assembly. Finally, the [2Fe-2S] cluster is transferred from ISCU to chaperone proteins, including HSCB, HSPA9 and GLRX5. In terms of biological role, may catalyze the desulfuration of L-cysteine to L-alanine as component of the cysteine desulfurase complex (NFS1:LYRM4), leading to the formation of a cysteine persulfide intermediate. Acts as a sulfur donor for MOCS3 by transferring the sulfur of the cysteine persulfide intermediate on MOCS3. The chain is Cysteine desulfurase from Rattus norvegicus (Rat).